We begin with the raw amino-acid sequence, 284 residues long: Bifunctional protein FolD (284 aa).

NADP(+) contacts are provided by residues 165–167, S190, and V231; that span reads GRS.

Belongs to the tetrahydrofolate dehydrogenase/cyclohydrolase family. In terms of assembly, homodimer.

It catalyses the reaction (6R)-5,10-methylene-5,6,7,8-tetrahydrofolate + NADP(+) = (6R)-5,10-methenyltetrahydrofolate + NADPH. It carries out the reaction (6R)-5,10-methenyltetrahydrofolate + H2O = (6R)-10-formyltetrahydrofolate + H(+). It participates in one-carbon metabolism; tetrahydrofolate interconversion. Its function is as follows. Catalyzes the oxidation of 5,10-methylenetetrahydrofolate to 5,10-methenyltetrahydrofolate and then the hydrolysis of 5,10-methenyltetrahydrofolate to 10-formyltetrahydrofolate. This is Bifunctional protein FolD from Natranaerobius thermophilus (strain ATCC BAA-1301 / DSM 18059 / JW/NM-WN-LF).